We begin with the raw amino-acid sequence, 208 residues long: Uracil phosphoribosyltransferase (208 aa).

Residues Arg-78, Arg-103, and Asp-130–Ser-138 each bind 5-phospho-alpha-D-ribose 1-diphosphate. Uracil is bound by residues Ile-193 and Gly-198–Ala-200. Asp-199 is a binding site for 5-phospho-alpha-D-ribose 1-diphosphate.

This sequence belongs to the UPRTase family. Mg(2+) serves as cofactor.

It catalyses the reaction UMP + diphosphate = 5-phospho-alpha-D-ribose 1-diphosphate + uracil. It functions in the pathway pyrimidine metabolism; UMP biosynthesis via salvage pathway; UMP from uracil: step 1/1. Allosterically activated by GTP. In terms of biological role, catalyzes the conversion of uracil and 5-phospho-alpha-D-ribose 1-diphosphate (PRPP) to UMP and diphosphate. The chain is Uracil phosphoribosyltransferase from Photobacterium profundum (strain SS9).